Here is a 524-residue protein sequence, read N- to C-terminus: Solute carrier family 35 member F5 (524 aa).

A run of 2 helical transmembrane segments spans residues 69–89 (MALG…SSEL) and 101–121 (FFST…FIIW). Serine 207 carries the phosphoserine modification. The next 8 membrane-spanning stretches (helical) occupy residues 244 to 264 (ISFF…EALS), 269 to 289 (AIVN…AAVF), 297 to 317 (FTLS…LVNL), 328 to 348 (TIGS…IVMI), 362 to 382 (MFFG…FFLL), 396 to 416 (VVLL…EFLW), 421 to 441 (FLTS…LSII), and 453 to 473 (WLFF…TLLC). Positions 253–317 (FLANLSYQEA…SIGGVVLVNL (65 aa)) constitute an EamA domain.

Belongs to the SLC35F solute transporter family.

It is found in the membrane. Functionally, putative solute transporter. This chain is Solute carrier family 35 member F5 (Slc35f5), found in Mus musculus (Mouse).